The primary structure comprises 130 residues: Small ribosomal subunit protein uS9 (130 aa).

This sequence belongs to the universal ribosomal protein uS9 family.

The chain is Small ribosomal subunit protein uS9 from Streptococcus suis (strain 98HAH33).